A 111-amino-acid polypeptide reads, in one-letter code: DNA-directed RNA polymerase subunit Rpo11 (111 aa).

The protein belongs to the archaeal Rpo11/eukaryotic RPB11/RPC19 RNA polymerase subunit family. In terms of assembly, part of the RNA polymerase complex.

The protein resides in the cytoplasm. It carries out the reaction RNA(n) + a ribonucleoside 5'-triphosphate = RNA(n+1) + diphosphate. Its function is as follows. DNA-dependent RNA polymerase (RNAP) catalyzes the transcription of DNA into RNA using the four ribonucleoside triphosphates as substrates. This Thermoplasma acidophilum (strain ATCC 25905 / DSM 1728 / JCM 9062 / NBRC 15155 / AMRC-C165) protein is DNA-directed RNA polymerase subunit Rpo11.